The following is a 458-amino-acid chain: Chromosomal replication initiator protein DnaA (458 aa).

The interval 1–93 (MKTELSEVWQ…NVIEDPAAEP (93 aa)) is domain I, interacts with DnaA modulators. Residues 94 to 119 (VDAPNVADLPAGTSAPAAEQNARLLG) are domain II. Residues 120–336 (YINPKYTFET…GALTRVVAYA (217 aa)) form a domain III, AAA+ region region. Residues Gly-164, Gly-166, Lys-167, and Thr-168 each coordinate ATP. The segment at 337-458 (NMLKCPLTYD…EQLIARIRAE (122 aa)) is domain IV, binds dsDNA.

It belongs to the DnaA family. Oligomerizes as a right-handed, spiral filament on DNA at oriC.

The protein localises to the cytoplasm. Plays an essential role in the initiation and regulation of chromosomal replication. ATP-DnaA binds to the origin of replication (oriC) to initiate formation of the DNA replication initiation complex once per cell cycle. Binds the DnaA box (a 9 base pair repeat at the origin) and separates the double-stranded (ds)DNA. Forms a right-handed helical filament on oriC DNA; dsDNA binds to the exterior of the filament while single-stranded (ss)DNA is stabiized in the filament's interior. The ATP-DnaA-oriC complex binds and stabilizes one strand of the AT-rich DNA unwinding element (DUE), permitting loading of DNA polymerase. After initiation quickly degrades to an ADP-DnaA complex that is not apt for DNA replication. Binds acidic phospholipids. This chain is Chromosomal replication initiator protein DnaA, found in Symbiobacterium thermophilum (strain DSM 24528 / JCM 14929 / IAM 14863 / T).